Consider the following 230-residue polypeptide: 5'-methylthioadenosine/S-adenosylhomocysteine nucleosidase (230 aa).

Catalysis depends on E12, which acts as the Proton acceptor. Substrate-binding positions include G78, I152, and 173–174 (ME). Residue D197 is the Proton donor of the active site.

It belongs to the PNP/UDP phosphorylase family. MtnN subfamily.

It catalyses the reaction S-adenosyl-L-homocysteine + H2O = S-(5-deoxy-D-ribos-5-yl)-L-homocysteine + adenine. The enzyme catalyses S-methyl-5'-thioadenosine + H2O = 5-(methylsulfanyl)-D-ribose + adenine. The catalysed reaction is 5'-deoxyadenosine + H2O = 5-deoxy-D-ribose + adenine. Its pathway is amino-acid biosynthesis; L-methionine biosynthesis via salvage pathway; S-methyl-5-thio-alpha-D-ribose 1-phosphate from S-methyl-5'-thioadenosine (hydrolase route): step 1/2. In terms of biological role, catalyzes the irreversible cleavage of the glycosidic bond in both 5'-methylthioadenosine (MTA) and S-adenosylhomocysteine (SAH/AdoHcy) to adenine and the corresponding thioribose, 5'-methylthioribose and S-ribosylhomocysteine, respectively. Also cleaves 5'-deoxyadenosine, a toxic by-product of radical S-adenosylmethionine (SAM) enzymes, into 5-deoxyribose and adenine. This is 5'-methylthioadenosine/S-adenosylhomocysteine nucleosidase from Actinobacillus succinogenes (strain ATCC 55618 / DSM 22257 / CCUG 43843 / 130Z).